The chain runs to 793 residues: Cation channel sperm-associated auxiliary subunit delta (793 aa).

An N-terminal signal peptide occupies residues 1–20 (MLMLMLVAAVTMWLRPLVTA). The Extracellular segment spans residues 21-725 (QPLCRARTVR…AFPVQLVSAG (705 aa)). Intrachain disulfides connect cysteine 24–cysteine 370, cysteine 60–cysteine 146, cysteine 145–cysteine 153, cysteine 388–cysteine 497, cysteine 511–cysteine 703, cysteine 526–cysteine 573, and cysteine 625–cysteine 653. A glycan (N-linked (GlcNAc...) asparagine) is linked at asparagine 128. Residues asparagine 231, asparagine 241, asparagine 473, asparagine 539, and asparagine 631 are each glycosylated (N-linked (GlcNAc...) asparagine). The helical transmembrane segment at 726 to 747 (VVMVLLISSILGSVWLAYMIPR) threads the bilayer. Topologically, residues 748 to 793 (LLRTARGRRMTSFVAQLYGRCKTVCQFRASATARTGSKPMGRHRSS) are cytoplasmic.

It belongs to the CATSPERD family. Component of the CatSper complex or CatSpermasome composed of the core pore-forming members CATSPER1, CATSPER2, CATSPER3 and CATSPER4 as well as auxiliary members CATSPERB, CATSPERG, CATSPERD, CATSPERE, CATSPERZ, C2CD6/CATSPERT, TMEM249, TMEM262 and EFCAB9. HSPA1 may be an additional auxiliary complex member. The core complex members CATSPER1, CATSPER2, CATSPER3 and CATSPER4 form a heterotetrameric channel. The auxiliary CATSPERB, CATSPERG, CATSPERD and CATSPERE subunits form a pavilion-like structure over the pore which stabilizes the complex through interactions with CATSPER4, CATSPER3, CATSPER1 and CATSPER2 respectively. TMEM262/CATSPERH interacts with CATSPERB, further stabilizing the complex. C2CD6/CATSPERT interacts at least with CATSPERD and is required for targeting the CatSper complex in the flagellar membrane.

The protein localises to the cell projection. Its subcellular location is the cilium. It is found in the flagellum membrane. In terms of biological role, auxiliary component of the CatSper complex, a complex involved in sperm cell hyperactivation. Sperm cell hyperactivation is needed for sperm motility which is essential late in the preparation of sperm for fertilization. Required for CATSPER1 stability before intraflagellar transport and/or incorporation of the CatSper complex channel into the flagellar membrane. This Macaca fascicularis (Crab-eating macaque) protein is Cation channel sperm-associated auxiliary subunit delta.